Reading from the N-terminus, the 270-residue chain is Formamidopyrimidine-DNA glycosylase (270 aa).

Pro-2 acts as the Schiff-base intermediate with DNA in catalysis. The active-site Proton donor is the Glu-3. Catalysis depends on Lys-58, which acts as the Proton donor; for beta-elimination activity. 3 residues coordinate DNA: His-91, Arg-110, and Arg-151. The FPG-type zinc-finger motif lies at 236–270 (LVYGRDGLPCPNCGRALKHATIGQRASVWCSHCQR). The active-site Proton donor; for delta-elimination activity is the Arg-260.

This sequence belongs to the FPG family. Monomer. It depends on Zn(2+) as a cofactor.

It catalyses the reaction Hydrolysis of DNA containing ring-opened 7-methylguanine residues, releasing 2,6-diamino-4-hydroxy-5-(N-methyl)formamidopyrimidine.. It carries out the reaction 2'-deoxyribonucleotide-(2'-deoxyribose 5'-phosphate)-2'-deoxyribonucleotide-DNA = a 3'-end 2'-deoxyribonucleotide-(2,3-dehydro-2,3-deoxyribose 5'-phosphate)-DNA + a 5'-end 5'-phospho-2'-deoxyribonucleoside-DNA + H(+). Functionally, involved in base excision repair of DNA damaged by oxidation or by mutagenic agents. Acts as a DNA glycosylase that recognizes and removes damaged bases. Has a preference for oxidized purines, such as 7,8-dihydro-8-oxoguanine (8-oxoG). Has AP (apurinic/apyrimidinic) lyase activity and introduces nicks in the DNA strand. Cleaves the DNA backbone by beta-delta elimination to generate a single-strand break at the site of the removed base with both 3'- and 5'-phosphates. This is Formamidopyrimidine-DNA glycosylase from Stenotrophomonas maltophilia (strain R551-3).